The chain runs to 820 residues: Scavenger receptor class F member 1 (820 aa).

Positions 1–23 (MLAAMGLELVFSLLLLWTQGTQG) are cleaved as a signal peptide. The Extracellular segment spans residues 24–422 (STLDPAGQHV…TCQLGRHGKN (399 aa)). 4 EGF-like domains span residues 56-90 (TIPI…AQCS), 98-133 (WGHD…RLCE), 163-193 (RRPC…RRCS), and 217-251 (WGPE…IRCE). Cystine bridges form between Cys-60/Cys-72, Cys-66/Cys-78, Cys-80/Cys-89, Cys-102/Cys-114, Cys-108/Cys-121, Cys-123/Cys-132, Cys-166/Cys-174, Cys-168/Cys-181, Cys-183/Cys-192, Cys-221/Cys-232, Cys-225/Cys-239, and Cys-241/Cys-250. Asn-291 carries N-linked (GlcNAc...) asparagine glycosylation. EGF-like domains follow at residues 304–341 (FGER…HRCE) and 353–384 (CSST…TSCN). A helical transmembrane segment spans residues 423-443 (ALIVGILVPLLLLLMGIVCCA). Over 444-820 (YCCSGTRLDP…VVPMSVPPQH (377 aa)) the chain is Cytoplasmic. Disordered regions lie at residues 549-685 (PMAQ…IQES) and 715-820 (NYQK…PPQH). A phosphoserine mark is found at Ser-590 and Ser-607. Acidic residues predominate over residues 631-648 (QEAEESTGPEQVNTEEDA). Residues 650–662 (TATSSGDPATSHG) are compositionally biased toward polar residues.

In terms of assembly, heterophilic interaction with SREC2 via its extracellular domain. The heterophilic interaction is suppressed by the presence of ligand such as Ac-LDL. Interacts with AVIL; the interaction occurs in embryonic dorsal root ganglions at 18 dpc and induces neurite-like outgrowth. As to expression, expressed weakly in brain, spinal cord and dorsal root ganglions.

It localises to the membrane. Mediates the binding and degradation of acetylated low density lipoprotein (Ac-LDL). Mediates heterophilic interactions, suggesting a function as adhesion protein. Plays a role in the regulation of neurite-like outgrowth. This is Scavenger receptor class F member 1 (Scarf1) from Mus musculus (Mouse).